Here is a 476-residue protein sequence, read N- to C-terminus: ATP synthase subunit beta (476 aa).

Residue 154-161 (GGAGVGKT) coordinates ATP.

This sequence belongs to the ATPase alpha/beta chains family. F-type ATPases have 2 components, CF(1) - the catalytic core - and CF(0) - the membrane proton channel. CF(1) has five subunits: alpha(3), beta(3), gamma(1), delta(1), epsilon(1). CF(0) has three main subunits: a(1), b(2) and c(9-12). The alpha and beta chains form an alternating ring which encloses part of the gamma chain. CF(1) is attached to CF(0) by a central stalk formed by the gamma and epsilon chains, while a peripheral stalk is formed by the delta and b chains.

The protein resides in the cell inner membrane. It catalyses the reaction ATP + H2O + 4 H(+)(in) = ADP + phosphate + 5 H(+)(out). Functionally, produces ATP from ADP in the presence of a proton gradient across the membrane. The catalytic sites are hosted primarily by the beta subunits. The polypeptide is ATP synthase subunit beta (Afipia carboxidovorans (strain ATCC 49405 / DSM 1227 / KCTC 32145 / OM5) (Oligotropha carboxidovorans)).